The sequence spans 353 residues: UPF0283 membrane protein YcjF (353 aa).

Basic and acidic residues predominate over residues 1–19; the sequence is MSEPLKPRIDFAEPLKEEP. Positions 1–35 are disordered; sequence MSEPLKPRIDFAEPLKEEPTSAFKAQQTFSEAESR. Transmembrane regions (helical) follow at residues 70–90, 100–120, and 213–233; these read MVMGGLALFGASVVGQGIQWT, VALGGCAAGALIVGAGVGSVV, and ESTLMIAVSPLALVDMAFIAW.

This sequence belongs to the UPF0283 family.

It is found in the cell inner membrane. The polypeptide is UPF0283 membrane protein YcjF (Salmonella agona (strain SL483)).